Consider the following 215-residue polypeptide: Small ribosomal subunit protein uS7 (215 aa).

Belongs to the universal ribosomal protein uS7 family. In terms of assembly, part of the 30S ribosomal subunit.

Functionally, one of the primary rRNA binding proteins, it binds directly to 16S rRNA where it nucleates assembly of the head domain of the 30S subunit. Is located at the subunit interface close to the decoding center. The chain is Small ribosomal subunit protein uS7 from Thermococcus kodakarensis (strain ATCC BAA-918 / JCM 12380 / KOD1) (Pyrococcus kodakaraensis (strain KOD1)).